The sequence spans 82 residues: Ferredoxin (82 aa).

The region spanning 3–31 is the 4Fe-4S ferredoxin-type domain; that stretch reads KYTIVDKDTCIACGACGAAAPDIYDYDDE. [4Fe-4S] cluster contacts are provided by cysteine 12, cysteine 15, cysteine 18, and cysteine 62.

[4Fe-4S] cluster serves as cofactor.

In terms of biological role, ferredoxins are iron-sulfur proteins that transfer electrons in a wide variety of metabolic reactions. This ferredoxin may act as a phosphodonor to cytochrome P450 BioI. The polypeptide is Ferredoxin (fer) (Bacillus subtilis (strain 168)).